A 260-amino-acid chain; its full sequence is Carbonic anhydrase 2 (260 aa).

At serine 2 the chain carries N-acetylserine. A Phosphoserine modification is found at serine 2. One can recognise an Alpha-carbonic anhydrase domain in the interval 3–259 (HHWGYSKSNG…LKNRKIKASF (257 aa)). The interval 16–39 (WHKEFPIANGDRQSPVDIDTGTAQ) is disordered. The active-site Proton donor/acceptor is the histidine 64. Position 87 is a phosphoserine (serine 87). Zn(2+) contacts are provided by histidine 94, histidine 96, and histidine 119. Serine 165 carries the phosphoserine modification. Position 198–199 (198–199 (TT)) interacts with substrate. At serine 232 the chain carries Phosphoserine.

This sequence belongs to the alpha-carbonic anhydrase family. Interacts with SLC4A4 and SLC26A6. Interaction with SLC4A7 regulates SLC4A7 transporter activity. It depends on Zn(2+) as a cofactor.

It is found in the cytoplasm. The protein resides in the cell membrane. The catalysed reaction is hydrogencarbonate + H(+) = CO2 + H2O. It carries out the reaction urea = cyanamide + H2O. With respect to regulation, inhibited by acetazolamide. Functionally, catalyzes the reversible hydration of carbon dioxide. Can also hydrate cyanamide to urea. Involved in the regulation of fluid secretion into the anterior chamber of the eye. Essential for bone resorption and osteoclast differentiation. Contributes to intracellular pH regulation in the duodenal upper villous epithelium during proton-coupled peptide absorption. Stimulates the chloride-bicarbonate exchange activity of SLC26A6. This is Carbonic anhydrase 2 (Ca2) from Rattus norvegicus (Rat).